The primary structure comprises 633 residues: Chaperone protein HtpG (633 aa).

An a; substrate-binding region spans residues Met-1 to Arg-341. The interval Glu-342 to Arg-562 is b. The tract at residues Leu-563 to Ala-633 is c.

This sequence belongs to the heat shock protein 90 family. In terms of assembly, homodimer.

It localises to the cytoplasm. Molecular chaperone. Has ATPase activity. In Cupriavidus taiwanensis (strain DSM 17343 / BCRC 17206 / CCUG 44338 / CIP 107171 / LMG 19424 / R1) (Ralstonia taiwanensis (strain LMG 19424)), this protein is Chaperone protein HtpG.